The following is a 1090-amino-acid chain: Leucine--tRNA ligase, cytoplasmic (1090 aa).

Ser2 is modified (N-acetylserine). The 'HIGH' region motif lies at 66 to 76; sequence PYMNGVMHAGH. Thr142 is modified (phosphothreonine). The 'KMSKS' region motif lies at 729-733; that stretch reads KMSKS. Lys732 is a binding site for ATP.

The protein belongs to the class-I aminoacyl-tRNA synthetase family.

The protein localises to the cytoplasm. It catalyses the reaction tRNA(Leu) + L-leucine + ATP = L-leucyl-tRNA(Leu) + AMP + diphosphate. This is Leucine--tRNA ligase, cytoplasmic (CDC60) from Saccharomyces cerevisiae (strain ATCC 204508 / S288c) (Baker's yeast).